The sequence spans 267 residues: WUSCHEL-related homeobox 8 (267 aa).

Positions T88–Q152 form a DNA-binding region, homeobox; WUS-type. The interval S148 to R195 is disordered. Over residues P171–R195 the composition is skewed to basic and acidic residues.

Belongs to the WUS homeobox family.

The protein resides in the nucleus. In terms of biological role, transcription factor which may be involved in developmental processes. The sequence is that of WUSCHEL-related homeobox 8 (WOX8) from Oryza sativa subsp. japonica (Rice).